Here is an 85-residue protein sequence, read N- to C-terminus: Large ribosomal subunit protein bL27 (85 aa).

The segment at methionine 1–leucine 21 is disordered.

This sequence belongs to the bacterial ribosomal protein bL27 family.

The sequence is that of Large ribosomal subunit protein bL27 from Janthinobacterium sp. (strain Marseille) (Minibacterium massiliensis).